Here is a 545-residue protein sequence, read N- to C-terminus: Esterase-5C (545 aa).

An N-terminal signal peptide occupies residues 1–19; it reads MLAARLIILLSFYWLSASA. Cysteines 84 and 103 form a disulfide. N-linked (GlcNAc...) asparagine glycosylation is present at Asn-113. Ser-207 serves as the catalytic Acyl-ester intermediate. Cysteines 259 and 271 form a disulfide. An N-linked (GlcNAc...) asparagine glycan is attached at Asn-421. The active-site Charge relay system is His-467. The N-linked (GlcNAc...) asparagine glycan is linked to Asn-507. A disulfide bridge connects residues Cys-515 and Cys-536.

The protein belongs to the type-B carboxylesterase/lipase family.

The protein resides in the secreted. It catalyses the reaction a carboxylic ester + H2O = an alcohol + a carboxylate + H(+). This chain is Esterase-5C (Est-5C), found in Drosophila persimilis (Fruit fly).